Here is an 83-residue protein sequence, read N- to C-terminus: Putative defensin-like protein 67 (83 aa).

Residues 1-24 (MGSSKLMVTCIVVAMLTISCDILS) form the signal peptide. 4 disulfides stabilise this stretch: Cys-38-Cys-82, Cys-42-Cys-65, Cys-51-Cys-80, and Cys-55-Cys-81.

This sequence belongs to the DEFL family.

It is found in the secreted. This Arabidopsis thaliana (Mouse-ear cress) protein is Putative defensin-like protein 67.